We begin with the raw amino-acid sequence, 191 residues long: Thymidylate kinase (191 aa).

7–14 (GVDGAGKS) is an ATP binding site.

The protein belongs to the thymidylate kinase family.

It catalyses the reaction dTMP + ATP = dTDP + ADP. Its function is as follows. Phosphorylation of dTMP to form dTDP in both de novo and salvage pathways of dTTP synthesis. The chain is Thymidylate kinase from Helicobacter pylori (strain P12).